The sequence spans 211 residues: ATP phosphoribosyltransferase (211 aa).

The protein belongs to the ATP phosphoribosyltransferase family. Short subfamily. In terms of assembly, heteromultimer composed of HisG and HisZ subunits.

Its subcellular location is the cytoplasm. It carries out the reaction 1-(5-phospho-beta-D-ribosyl)-ATP + diphosphate = 5-phospho-alpha-D-ribose 1-diphosphate + ATP. The protein operates within amino-acid biosynthesis; L-histidine biosynthesis; L-histidine from 5-phospho-alpha-D-ribose 1-diphosphate: step 1/9. Its function is as follows. Catalyzes the condensation of ATP and 5-phosphoribose 1-diphosphate to form N'-(5'-phosphoribosyl)-ATP (PR-ATP). Has a crucial role in the pathway because the rate of histidine biosynthesis seems to be controlled primarily by regulation of HisG enzymatic activity. This is ATP phosphoribosyltransferase from Bacillus mycoides (strain KBAB4) (Bacillus weihenstephanensis).